The chain runs to 295 residues: (R)-3-hydroxydecanoyl-ACP:CoA transacylase (295 aa).

One can recognise an AB hydrolase-1 domain in the interval 28–254 (NTIILINGSL…VIRDAGHFLD (227 aa)).

It participates in polyester biosynthesis; polyhydroxyalkanoate biosynthesis. Functionally, catalyzes the transfer of the acyl moiety from in vitro synthesized 3-hydroxydecanoyl-CoA to acyl carrier protein. This is (R)-3-hydroxydecanoyl-ACP:CoA transacylase (phaG) from Ectopseudomonas oleovorans (Pseudomonas oleovorans).